The following is a 118-amino-acid chain: Large ribosomal subunit protein bL19 (118 aa).

This sequence belongs to the bacterial ribosomal protein bL19 family.

Its function is as follows. This protein is located at the 30S-50S ribosomal subunit interface and may play a role in the structure and function of the aminoacyl-tRNA binding site. This chain is Large ribosomal subunit protein bL19, found in Nautilia profundicola (strain ATCC BAA-1463 / DSM 18972 / AmH).